The following is a 495-amino-acid chain: Dihydrolipoyl dehydrogenase, mitochondrial (495 aa).

Residues 59–68, Lys-77, and 169–171 contribute to the FAD site; these read EKNATLGGTC and SGS. Cys-68 and Cys-73 form a disulfide bridge. NAD(+) is bound by residues 206–213, Glu-229, Val-264, and Gly-299; that span reads GAGVIGLE. FAD is bound by residues Asp-340 and 346-349; that span reads MLAH. Residue His-472 is the Proton acceptor of the active site.

Belongs to the class-I pyridine nucleotide-disulfide oxidoreductase family. Requires FAD as cofactor.

The protein localises to the mitochondrion matrix. The enzyme catalyses N(6)-[(R)-dihydrolipoyl]-L-lysyl-[protein] + NAD(+) = N(6)-[(R)-lipoyl]-L-lysyl-[protein] + NADH + H(+). This Caenorhabditis elegans protein is Dihydrolipoyl dehydrogenase, mitochondrial (dld-1).